We begin with the raw amino-acid sequence, 128 residues long: Cionin (128 aa).

The signal sequence occupies residues 1–22 (MGSNIVIYFSIIVIVTLNVNGV). A propeptide spanning residues 23 to 108 (PASDLFKSVS…NQGHMQRMDR (86 aa)) is cleaved from the precursor. Residues Tyr110 and Tyr111 each carry the sulfotyrosine modification. At Phe116 the chain carries Phenylalanine amide. Positions 120–128 (AIEDVDYEY) are excised as a propeptide.

This sequence belongs to the gastrin/cholecystokinin family. As to expression, expressed in both the gut and the neural ganglion.

Its subcellular location is the secreted. This chain is Cionin, found in Ciona intestinalis (Transparent sea squirt).